The following is a 143-amino-acid chain: Transcriptional regulator MraZ (143 aa).

SpoVT-AbrB domains lie at 5–47 and 76–119; these read QYEH…SLEE and AVEC…SKEV.

It belongs to the MraZ family. As to quaternary structure, forms oligomers.

The protein localises to the cytoplasm. Its subcellular location is the nucleoid. In Thermoanaerobacter pseudethanolicus (strain ATCC 33223 / 39E) (Clostridium thermohydrosulfuricum), this protein is Transcriptional regulator MraZ.